A 312-amino-acid polypeptide reads, in one-letter code: Olfactory receptor 4F3/4F16/4F29 (312 aa).

Residues 1-25 (MDGENHSVVSEFLFLGLTHSWEIQL) lie on the Extracellular side of the membrane. Asn-5 carries an N-linked (GlcNAc...) asparagine glycan. The helical transmembrane segment at 26-49 (LLLVFSSVLYVASITGNILIVFSV) threads the bilayer. Topologically, residues 50-57 (TTDPHLHS) are cytoplasmic. The chain crosses the membrane as a helical span at residues 58–79 (PMYFLLASLSFIDLGACSVTSP). Residues 80–100 (KMIYDLFRKRKVISFGGCIAQ) are Extracellular-facing. A disulfide bond links Cys-97 and Cys-189. Residues 101–120 (IFFIHVVGGVEMVLLIAMAF) form a helical membrane-spanning segment. At 121–139 (DRYVALCKPLHYLTIMSPR) the chain is on the cytoplasmic side. A helical membrane pass occupies residues 140-158 (MCLSFLAVAWTLGVSHSLF). The Extracellular segment spans residues 159–195 (QLAFLVNLAFCGPNVLDSFYCDLPRLLRLACTDTYRL). A helical transmembrane segment spans residues 196–219 (QFMVTVNSGFICVGTFFILLISYV). Topologically, residues 220–235 (FILFTVWKHSSGGSSK) are cytoplasmic. Residues 236–258 (ALSTLSAHSTVVLLFFGPPMFVY) form a helical membrane-spanning segment. Topologically, residues 259-269 (TRPHPNSQMDK) are extracellular. A helical transmembrane segment spans residues 270 to 289 (FLAIFDAVLTPFLNPVVYTF). Over 290-312 (RNKEMKAAIKRVCKQLVIYKRIS) the chain is Cytoplasmic.

The protein belongs to the G-protein coupled receptor 1 family.

It localises to the cell membrane. Odorant receptor. In Homo sapiens (Human), this protein is Olfactory receptor 4F3/4F16/4F29 (OR4F3).